We begin with the raw amino-acid sequence, 454 residues long: Neuronal acetylcholine receptor subunit alpha-5 (454 aa).

A disordered region spans residues 1–26 (MPLRARSRKPGAGPAARAPQAGVSEP). The first 29 residues, 1–29 (MPLRARSRKPGAGPAARAPQAGVSEPSFV), serve as a signal peptide directing secretion. Positions 10-22 (PGAGPAARAPQAG) are enriched in low complexity. The Extracellular segment spans residues 30-240 (AKSEDRLFKH…IIRRLPLFYT (211 aa)). Asn-55, Asn-169, and Asn-215 each carry an N-linked (GlcNAc...) asparagine glycan. The cysteines at positions 156 and 170 are disulfide-linked. Cys-220 and Cys-221 are oxidised to a cystine. Helical transmembrane passes span 241–261 (LFLI…FYLP), 270–290 (LCTS…EIIP), and 303–323 (LVFT…AINI). Residues 324-416 (HHRSSSTHNA…KFIAQVLDRM (93 aa)) lie on the Cytoplasmic side of the membrane. The chain crosses the membrane as a helical span at residues 417-437 (FLWAFLLVSIIGSLVLFIPVI). The Extracellular segment spans residues 438–454 (HKWASIIVPVHIGSTNT).

Belongs to the ligand-gated ion channel (TC 1.A.9) family. Acetylcholine receptor (TC 1.A.9.1) subfamily. Alpha-5/CHRNA5 sub-subfamily. As to quaternary structure, neuronal AChR that forms heteropentamers composed of two different type of subunits: alpha and non-alpha (beta). CHRNA5/alpha-5 subunit is only able to form functional nAChRs when co-assembled with another alpha subunit, can be combined to CHRNA4/alpha-4 or CHRNA3/alpha-3 and CHRNB4/beta-4 or CHRNB2/beta-2 to give rise to functional receptors. Interacts with LYPD6.

It localises to the synaptic cell membrane. The protein resides in the cell membrane. It carries out the reaction Ca(2+)(in) = Ca(2+)(out). It catalyses the reaction K(+)(in) = K(+)(out). The enzyme catalyses Na(+)(in) = Na(+)(out). Activated by a myriad of ligands such as acetylcholine, cytisine, nicotine, choline and epibatidine. Its function is as follows. Component of neuronal acetylcholine receptors (nAChRs) that function as pentameric, ligand-gated cation channels with high calcium permeability among other activities. nAChRs are excitatory neurotrasnmitter receptors formed by a collection of nAChR subunits known to mediate synaptic transmission in the nervous system and the neuromuscular junction. Each nAchR subunit confers differential attributes to channel properties, including activation, deactivation and desensitization kinetics, pH sensitivity, cation permeability, and binding to allosteric modulators. Has an accessory rather than functional role and is only able to form functional nAChRs when co-assembled with another beta subunit. Participates in pentameric assemblies along with CHRNA3, CHRNA4, CHRNB2 and CHRNB4. Increases receptor sensitivity to acetylcholine and nicotine when associated with CHRNA4 and CHRNB2. Plays a role in nicotine addiction. The protein is Neuronal acetylcholine receptor subunit alpha-5 (CHRNA5) of Gallus gallus (Chicken).